Consider the following 400-residue polypeptide: CCA-adding enzyme (400 aa).

Gly28 and Arg31 together coordinate ATP. Gly28 and Arg31 together coordinate CTP. 2 residues coordinate Mg(2+): Asp41 and Asp43. The ATP site is built by Arg112, Asp155, Arg158, Arg161, and Arg164. Positions 112, 155, 158, 161, and 164 each coordinate CTP.

Belongs to the tRNA nucleotidyltransferase/poly(A) polymerase family. Bacterial CCA-adding enzyme type 3 subfamily. In terms of assembly, homodimer. The cofactor is Mg(2+).

It carries out the reaction a tRNA precursor + 2 CTP + ATP = a tRNA with a 3' CCA end + 3 diphosphate. It catalyses the reaction a tRNA with a 3' CCA end + 2 CTP + ATP = a tRNA with a 3' CCACCA end + 3 diphosphate. Its function is as follows. Catalyzes the addition and repair of the essential 3'-terminal CCA sequence in tRNAs without using a nucleic acid template. Adds these three nucleotides in the order of C, C, and A to the tRNA nucleotide-73, using CTP and ATP as substrates and producing inorganic pyrophosphate. tRNA 3'-terminal CCA addition is required both for tRNA processing and repair. Also involved in tRNA surveillance by mediating tandem CCA addition to generate a CCACCA at the 3' terminus of unstable tRNAs. While stable tRNAs receive only 3'-terminal CCA, unstable tRNAs are marked with CCACCA and rapidly degraded. This is CCA-adding enzyme from Staphylococcus aureus (strain Mu3 / ATCC 700698).